We begin with the raw amino-acid sequence, 445 residues long: Phosphoglucosamine mutase (445 aa).

Ser-99 functions as the Phosphoserine intermediate in the catalytic mechanism. The Mg(2+) site is built by Ser-99, Asp-242, Asp-244, and Asp-246. Ser-99 bears the Phosphoserine mark.

This sequence belongs to the phosphohexose mutase family. It depends on Mg(2+) as a cofactor. In terms of processing, activated by phosphorylation.

The catalysed reaction is alpha-D-glucosamine 1-phosphate = D-glucosamine 6-phosphate. Catalyzes the conversion of glucosamine-6-phosphate to glucosamine-1-phosphate. The protein is Phosphoglucosamine mutase of Campylobacter jejuni subsp. jejuni serotype O:2 (strain ATCC 700819 / NCTC 11168).